We begin with the raw amino-acid sequence, 153 residues long: Protein SREK1IP1 (153 aa).

The CCHC-type zinc finger occupies 13 to 30; the sequence is AGCRKCGYPGHLTFECRN. Residues 44–153 form a disordered region; sequence VSSTSSEDSD…SPNRSEVTKK (110 aa). Ser-52 is modified (phosphoserine). The span at 66-84 shows a compositional bias: basic and acidic residues; that stretch reads QEKRINEEEEKKKEKSREK. Residues 85–94 are compositionally biased toward basic residues; sequence IKLKKKRKRS. Residues Ser-96 and Ser-97 each carry the phosphoserine modification. Positions 106–141 are enriched in basic residues; the sequence is QKKQKYQKKEKKKEKKNKSKKGKHHKKEKKKRKKEK.

As to quaternary structure, interacts with SREK1/SFRS12.

In terms of biological role, possible splicing regulator involved in the control of cellular survival. The protein is Protein SREK1IP1 (Srek1ip1) of Rattus norvegicus (Rat).